A 339-amino-acid chain; its full sequence is MDPGVSSHLRTASLDEARRLPELERVLKSGWLIKKGHATSTKKQLWAVLRRDQLSFYKDEKEYKTKFIFPTQDISAVAYYKEKSPKTFFLYLNEKIIRLIATSNEDAEEWVHVLRSTTGYRAPFSRHPISYILANSSSRTESEPNVQISDTDFDNISTEPRNQTTSPLDLETGQGDHFCTSLYDLIQFGKLRPPGINEENANYPFNPQEVNTLNKHRHSASLQNLYKLLDENKVLMQGTIHWLHGNLHRWSKCWAVVRGYGMTIYNTNREYKPVKVIPIADIQDVAEINVPESSHKYFFTVITQNKPIEFRVDNEDSLILWVAALKTSIDKANGTFTAC.

The 95-residue stretch at 25 to 119 (RVLKSGWLIK…WVHVLRSTTG (95 aa)) folds into the PH 1 domain. A compositionally biased stretch (polar residues) spans 141–167 (ESEPNVQISDTDFDNISTEPRNQTTSP). Residues 141-170 (ESEPNVQISDTDFDNISTEPRNQTTSPLDL) are disordered. The PH 2 domain occupies 233–330 (KVLMQGTIHW…WVAALKTSID (98 aa)).

In terms of assembly, interacts (via domain PH 1) with phosphatidylinositol 4-phosphate 5-kinase its3; the interaction is direct but opy1 does not appear to regulate its3 localization or function.

It localises to the cell tip. It is found in the cell membrane. In terms of biological role, binds phosphatidylinositol 4,5-bisphosphate (PtdIns(4,5)P2/PIP2) at the cell membrane. The chain is Pleckstrin homology domain protein opy1 from Schizosaccharomyces pombe (strain 972 / ATCC 24843) (Fission yeast).